The chain runs to 530 residues: NADH-quinone oxidoreductase subunit C/D (530 aa).

The tract at residues 1-144 (MQEIQFIVPA…NPLCMANEET (144 aa)) is NADH dehydrogenase I subunit C. Residues 171–530 (EYVVNIGPQH…LDYVVPDIDR (360 aa)) form an NADH dehydrogenase I subunit D region.

It in the N-terminal section; belongs to the complex I 30 kDa subunit family. The protein in the C-terminal section; belongs to the complex I 49 kDa subunit family. NDH-1 is composed of 13 different subunits. Subunits NuoB, CD, E, F, and G constitute the peripheral sector of the complex.

The protein localises to the cell inner membrane. It catalyses the reaction a quinone + NADH + 5 H(+)(in) = a quinol + NAD(+) + 4 H(+)(out). Functionally, NDH-1 shuttles electrons from NADH, via FMN and iron-sulfur (Fe-S) centers, to quinones in the respiratory chain. The immediate electron acceptor for the enzyme in this species is believed to be a menaquinone. Couples the redox reaction to proton translocation (for every two electrons transferred, four hydrogen ions are translocated across the cytoplasmic membrane), and thus conserves the redox energy in a proton gradient. This Bacteroides thetaiotaomicron (strain ATCC 29148 / DSM 2079 / JCM 5827 / CCUG 10774 / NCTC 10582 / VPI-5482 / E50) protein is NADH-quinone oxidoreductase subunit C/D.